The sequence spans 129 residues: Insulin-like growth factor 2 (129 aa).

The N-terminal stretch at 1–24 (MGVPMGKSLLAPLTFLALASCCFA) is a signal peptide. Residues 25–52 (AYRPSETLCGGELVDTLQFVCGDRGFYF) are b. Disulfide bonds link cysteine 33/cysteine 72, cysteine 45/cysteine 85, and cysteine 71/cysteine 76. Residues 53–65 (SRPASRVSRRSSR) form a c region. The segment at 66-86 (GIVEECCFRSCDLALLETYCA) is a. The tract at residues 87-92 (TPAKSE) is d. Positions 93 to 129 (RDVSTPPTVLPDNFPRYPVGKFFQYDTWKQSAQRLRR) are cleaved as a propeptide — e peptide.

It belongs to the insulin family. As to quaternary structure, interacts with MYORG; this interaction is required for IGF2 secretion. Interacts with integrins ITGAV:ITGB3 and ITGA6:ITGB4; integrin-binding is required for IGF2 signaling. In terms of processing, proteolytically processed by PCSK4, proIGF2 is cleaved at Arg-129 and Arg-92 to generate big-IGF2 and mature IGF2.

The protein resides in the secreted. Functionally, the insulin-like growth factors possess growth-promoting activity. Major fetal growth hormone in mammals. Plays a key role in regulating fetoplacental development. IGF2 is influenced by placental lactogen. Also involved in tissue differentiation. In adults, involved in glucose metabolism in adipose tissue, skeletal muscle and liver. Acts as a ligand for integrin which is required for IGF2 signaling. Positively regulates myogenic transcription factor MYOD1 function by facilitating the recruitment of transcriptional coactivators, thereby controlling muscle terminal differentiation. Inhibits myoblast differentiation and modulates metabolism via increasing the mitochondrial respiration rate. In terms of biological role, preptin undergoes glucose-mediated co-secretion with insulin, and acts as a physiological amplifier of glucose-mediated insulin secretion. Exhibits osteogenic properties by increasing osteoblast mitogenic activity through phosphoactivation of MAPK1 and MAPK3. The chain is Insulin-like growth factor 2 from Neovison vison (American mink).